A 410-amino-acid polypeptide reads, in one-letter code: 3-phosphoshikimate 1-carboxyvinyltransferase (410 aa).

3-phosphoshikimate is bound by residues Lys21, Ser22, and Arg26. Lys21 lines the phosphoenolpyruvate pocket. Residues Gly69 and Arg97 each contribute to the phosphoenolpyruvate site. Residues Ser143, Ser144, Gln145, Ser171, Asp288, and Lys315 each coordinate 3-phosphoshikimate. Gln145 serves as a coordination point for phosphoenolpyruvate. Catalysis depends on Asp288, which acts as the Proton acceptor. Positions 319, 364, and 389 each coordinate phosphoenolpyruvate.

Belongs to the EPSP synthase family. As to quaternary structure, monomer.

The protein localises to the cytoplasm. It carries out the reaction 3-phosphoshikimate + phosphoenolpyruvate = 5-O-(1-carboxyvinyl)-3-phosphoshikimate + phosphate. The protein operates within metabolic intermediate biosynthesis; chorismate biosynthesis; chorismate from D-erythrose 4-phosphate and phosphoenolpyruvate: step 6/7. Functionally, catalyzes the transfer of the enolpyruvyl moiety of phosphoenolpyruvate (PEP) to the 5-hydroxyl of shikimate-3-phosphate (S3P) to produce enolpyruvyl shikimate-3-phosphate and inorganic phosphate. In Bacteroides fragilis (strain ATCC 25285 / DSM 2151 / CCUG 4856 / JCM 11019 / LMG 10263 / NCTC 9343 / Onslow / VPI 2553 / EN-2), this protein is 3-phosphoshikimate 1-carboxyvinyltransferase.